Here is a 248-residue protein sequence, read N- to C-terminus: Probable transcriptional regulatory protein RPB_4273 (248 aa).

The tract at residues 1-22 is disordered; sequence MAGHSQFKNIMHRKGKQDAQRS.

It belongs to the TACO1 family.

The protein localises to the cytoplasm. The chain is Probable transcriptional regulatory protein RPB_4273 from Rhodopseudomonas palustris (strain HaA2).